The chain runs to 452 residues: Prenyltransferase fsdK (452 aa).

The protein belongs to the tryptophan dimethylallyltransferase family.

It functions in the pathway mycotoxin biosynthesis. Its function is as follows. Prenyltransferase; part of the gene cluster that mediates the biosynthesis of fusaridione A, a bright yellow trans-fused decalin-containing tetramic acid with antimicrobial activity. The PKS module of fsdS catalyzes the formation of the polyketide unit which is then conjugated to L-tyrosine by the condensation domain of the fsdS NRPS module. Activity of the Dieckmann cyclase domain (RED) results in release of the intermediate fusaridione A. The unstable pyrrolidinedione ring of fusaridione A is opened through a reverse-Dieckmann reaction to afford its ring-opened form. The polypeptide is Prenyltransferase fsdK (Fusarium heterosporum).